The following is a 121-amino-acid chain: Small ribosomal subunit protein uS13 (121 aa).

Positions 97-121 (VRGQRTRTNARTRRGARKTVAGRKK) are disordered. Residues 100–121 (QRTRTNARTRRGARKTVAGRKK) are compositionally biased toward basic residues.

Belongs to the universal ribosomal protein uS13 family. Part of the 30S ribosomal subunit. Forms a loose heterodimer with protein S19. Forms two bridges to the 50S subunit in the 70S ribosome.

Its function is as follows. Located at the top of the head of the 30S subunit, it contacts several helices of the 16S rRNA. In the 70S ribosome it contacts the 23S rRNA (bridge B1a) and protein L5 of the 50S subunit (bridge B1b), connecting the 2 subunits; these bridges are implicated in subunit movement. Contacts the tRNAs in the A and P-sites. This chain is Small ribosomal subunit protein uS13, found in Prochlorococcus marinus (strain NATL1A).